A 159-amino-acid polypeptide reads, in one-letter code: 17 kDa surface antigen (159 aa).

The N-terminal stretch at 1–19 (MKLLSKIMIIALAASMLQA) is a signal peptide. Cysteine 20 carries N-palmitoyl cysteine lipidation. Cysteine 20 carries the S-diacylglycerol cysteine lipid modification.

The protein belongs to the rickettsiale 17 kDa surface antigen family.

Its subcellular location is the cell outer membrane. In Rickettsia prowazekii (strain Madrid E), this protein is 17 kDa surface antigen (omp).